A 92-amino-acid chain; its full sequence is Neuropeptide F (92 aa).

A signal peptide spans 1-27 (MSQSRPLALLVVAALVAAAVLVAAAEA). Positions 28 to 51 (QQADGNKLEGLADALKYLQELDRY) are excised as a propeptide. Phe60 carries the post-translational modification Phenylalanine amide. Positions 64-92 (AELRPDVVDDVIPEEMSADKFWRRFARRR) are excised as a propeptide.

The protein belongs to the NPY family. As to expression, widely expressed in the nervous system. Expressed in corpora cardiaca, hypocerebral ganglion, frontal ganglion, protocerebrum, antennal lobe, tritocerebrum and thoracic ganglia. Not detected in corpora allata, pars intercerebralis, circumesophageal connectives, subesophageal ganglion, abdominal ganglion and abdominal perisympathetic organs.

Its subcellular location is the secreted. Its function is as follows. Accelerates ovarian maturation in females. This Locusta migratoria (Migratory locust) protein is Neuropeptide F.